Here is a 160-residue protein sequence, read N- to C-terminus: Small ribosomal subunit protein uS9 (160 aa).

It belongs to the universal ribosomal protein uS9 family.

The protein is Small ribosomal subunit protein uS9 of Rhodopseudomonas palustris (strain ATCC BAA-98 / CGA009).